The following is a 1505-amino-acid chain: G patch domain-containing protein 8 (1505 aa).

A G-patch domain is found at 40–86 (SDNIGHRLLQKHGWKLGQGLGKSLQGRTDPIPIVVKYDVMGMGRMEM). Residues 89 to 124 (DYAEDATERRRVLEVEKEDTEELRQKYKDYVDKEKA) are a coiled coil. Residues 136–160 (FYCELCDKQYQKHQEFDNHINSYDH) form a C2H2-type zinc finger. 2 stretches are compositionally biased toward basic and acidic residues: residues 166–175 (LKDLKQREFA) and 182–206 (SRKD…RKQA). A disordered region spans residues 166–244 (LKDLKQREFA…SSTNSGASAV (79 aa)). The span at 223-233 (VDEDGGEEDKD) shows a compositional bias: acidic residues. Lys311 participates in a covalent cross-link: Glycyl lysine isopeptide (Lys-Gly) (interchain with G-Cter in SUMO2). Composition is skewed to basic and acidic residues over residues 322 to 339 (HAEE…EKSS) and 421 to 436 (EGDH…ENRK). 2 disordered regions span residues 322–393 (HAEE…EPEY) and 419–537 (QMEG…FPVL). A compositionally biased stretch (polar residues) spans 437-449 (SSSPKPQGCSKTA). Residue Lys479 is modified to N6-acetyllysine. Lys573 participates in a covalent cross-link: Glycyl lysine isopeptide (Lys-Gly) (interchain with G-Cter in SUMO2). 2 stretches are compositionally biased toward basic and acidic residues: residues 575-612 (SRNK…KSQE) and 648-665 (SETE…EPSG). A disordered region spans residues 575–1304 (SRNKDAKAKG…ESTDGTEDAS (730 aa)). Residue Ser648 is modified to Phosphoserine. Basic residues predominate over residues 666–687 (KSHRHKKKKKHKKSSKHKRKHK). A compositionally biased stretch (basic and acidic residues) spans 688 to 702 (ADTEEKSSKAESGEK). Residues 703-715 (SKKRKKRKRKKNK) show a composition bias toward basic residues. Residues Ser733, Ser735, and Ser753 each carry the phosphoserine modification. Residues 745–767 (AQDDSQRRSLPAEEGNSGKKDDG) are compositionally biased toward basic and acidic residues. Residues 794 to 804 (ANTKHSSRSSH) are compositionally biased toward basic residues. Positions 832–849 (SEEEEEEEEEEEEEDEDS) are enriched in acidic residues. Positions 856-871 (SRSRSGHRHSSHRSSR) are enriched in basic residues. The segment covering 872 to 900 (RSYSSSSDASSDQSCYSRQHSYSDDSYSD) has biased composition (low complexity). Residues Ser915 and Ser918 each carry the phosphoserine modification. Residues 923–932 (SKHRSKRHKY) show a composition bias toward basic residues. A phosphoserine mark is found at Ser985, Ser1013, Ser1018, Ser1037, and Ser1039. A compositionally biased stretch (basic and acidic residues) spans 1017-1031 (ESPEERRSGRRDFIR). Residues 1050–1063 (GPGKKEDGRGDDSK) are compositionally biased toward basic and acidic residues. A Phosphoserine modification is found at Ser1085. 3 stretches are compositionally biased toward basic and acidic residues: residues 1097–1112 (LLEK…KPNV), 1163–1185 (KKCE…EEGS), and 1211–1220 (EEPKSEEATA). A Glycyl lysine isopeptide (Lys-Gly) (interchain with G-Cter in SUMO2) cross-link involves residue Lys1109. The residue at position 1179 (Ser1179) is a Phosphoserine.

The polypeptide is G patch domain-containing protein 8 (Gpatch8) (Mus musculus (Mouse)).